The sequence spans 196 residues: CRISPR-associated exonuclease Cas4 (196 aa).

Position 23 (cysteine 23) interacts with [4Fe-4S] cluster. Positions 50, 90, and 103 each coordinate Mn(2+). 3 residues coordinate [4Fe-4S] cluster: cysteine 184, cysteine 187, and cysteine 193.

Belongs to the CRISPR-associated exonuclease Cas4 family. Requires Mg(2+) as cofactor. The cofactor is [4Fe-4S] cluster.

The enzyme catalyses exonucleolytic cleavage in the 5'- to 3'-direction to yield nucleoside 3'-phosphates.. In terms of biological role, CRISPR (clustered regularly interspaced short palindromic repeat) is an adaptive immune system that provides protection against mobile genetic elements (viruses, transposable elements and conjugative plasmids). CRISPR clusters contain sequences complementary to antecedent mobile elements and target invading nucleic acids. CRISPR clusters are transcribed and processed into CRISPR RNA (crRNA). This may be a 5' to 3' ssDNA exonuclease. This Francisella tularensis subsp. novicida (strain U112) protein is CRISPR-associated exonuclease Cas4.